We begin with the raw amino-acid sequence, 165 residues long: Cyclic pyranopterin monophosphate synthase (165 aa).

Substrate contacts are provided by residues 79–81 (LCH) and 117–118 (ME). Residue aspartate 132 is part of the active site.

Belongs to the MoaC family. As to quaternary structure, homohexamer; trimer of dimers.

The enzyme catalyses (8S)-3',8-cyclo-7,8-dihydroguanosine 5'-triphosphate = cyclic pyranopterin phosphate + diphosphate. The protein operates within cofactor biosynthesis; molybdopterin biosynthesis. In terms of biological role, catalyzes the conversion of (8S)-3',8-cyclo-7,8-dihydroguanosine 5'-triphosphate to cyclic pyranopterin monophosphate (cPMP). The polypeptide is Cyclic pyranopterin monophosphate synthase (Chloroflexus aggregans (strain MD-66 / DSM 9485)).